The chain runs to 372 residues: MNSGIDLQRTFIQALVDLGLSSEIAKTLWLPFPMLLMIVVATVGVLVTVWLERKISAAAQQRIGPEFMGPLGTLAPLADGLKLLFKEDVVPAKADPLLFTLGPVIVAVPVFLSYLVVPFGQNLVITDLGVAIFLWIALSSIQPIGLLMSGYASNNKYSLLGGLRAAAQSISYEIPLALAVLAVAMMSNSLSTIDIVEQQSSYGILGWNIWRQPLGFIIFWIAVLAECERLPFDLPEAEEELVAGYQTEYTGMKFALYYLASYVNLVLSSLLVAVLYLGGWESPLPVELISNWFGVSETTPWLQITNATLGIIMTLLKTYLLVFIAVLLRWTLPRVRIDQLLDLGWKFLLPVALVNLLLTAALKLTFPFAFGG.

8 consecutive transmembrane segments (helical) span residues 29–49 (WLPFPMLLMIVVATVGVLVTV), 97–117 (LLFTLGPVIVAVPVFLSYLVV), 128–148 (LGVAIFLWIALSSIQPIGLLM), 176–196 (LALAVLAVAMMSNSLSTIDIV), 204–224 (ILGWNIWRQPLGFIIFWIAVL), 254–274 (FALYYLASYVNLVLSSLLVAV), 308–328 (TLGIIMTLLKTYLLVFIAVLL), and 351–371 (VALVNLLLTAALKLTFPFAFG).

This sequence belongs to the complex I subunit 1 family. In terms of assembly, NDH-1 is composed of at least 11 different subunits.

Its subcellular location is the cellular thylakoid membrane. The enzyme catalyses a plastoquinone + NADH + (n+1) H(+)(in) = a plastoquinol + NAD(+) + n H(+)(out). It catalyses the reaction a plastoquinone + NADPH + (n+1) H(+)(in) = a plastoquinol + NADP(+) + n H(+)(out). NDH-1 shuttles electrons from an unknown electron donor, via FMN and iron-sulfur (Fe-S) centers, to quinones in the respiratory and/or the photosynthetic chain. The immediate electron acceptor for the enzyme in this species is believed to be plastoquinone. Couples the redox reaction to proton translocation, and thus conserves the redox energy in a proton gradient. The polypeptide is NAD(P)H-quinone oxidoreductase subunit 1 (Trichodesmium erythraeum (strain IMS101)).